The sequence spans 368 residues: Propane 2-monooxygenase, hydroxylase component small subunit (368 aa).

This sequence belongs to the TmoE/XamoE family. As to quaternary structure, the propane 2-monooxygenase multicomponent enzyme system is composed of an electron transfer component and a monooxygenase component interacting with the effector protein PrmD. The electron transfer component is composed of a reductase (PrmB), and the monooxygenase component is formed by a large subunit (PrmA) and a small subunit (PrmC). Probably requires the presence of the chaperonin-like protein PrmG to ensure a productive folding, resulting of a soluble PrmC, which leads to the active form of PrmABCD.

It carries out the reaction propane + NADH + O2 + H(+) = propan-2-ol + NAD(+) + H2O. Functionally, component of the propane 2-monooxygenase multicomponent enzyme system which is involved in the degradation of propane via the O2-dependent hydroxylation of propane. Also able to catalyze the oxidation the water contaminant N-nitrosodimethylamine (NDMA). This Rhodococcus jostii (strain RHA1) protein is Propane 2-monooxygenase, hydroxylase component small subunit.